Reading from the N-terminus, the 242-residue chain is MTINGLLIKISPKKFFNTKAESEKYAAREMIQHIKTFSSQSHYSPNSETKQSHIIPSQCTTKKYTISDNTNNTIDTNKQQDTLKQLDFSKKCVIENIHDHYFTKIYIIDLENKPQLNLVPRQDSIYLGFINSLHHSVGKYSDWYNCTNDNIAEQISTSGNNKLLYCIDGGISDLSDHFMTAFIYPIINYISSRITNKFENTRTSICIISGDHAGYCTRYCLEKMIRWNKLSNIDVSNSIIVD.

This is an uncharacterized protein from Acanthamoeba polyphaga mimivirus (APMV).